Consider the following 185-residue polypeptide: Prenylated Rab acceptor protein 1 (185 aa).

Residues 1 to 78 lie on the Cytoplasmic side of the membrane; sequence MAVEKDQQKD…RNVEYYQSNY (78 aa). A required for interaction with prenylated RAB3A and VAMP2 region spans residues 30–54; the sequence is AGREWLERRRATIRSWGSFVDQRRF. Transmembrane regions (helical) follow at residues 79-94 and 95-112; these read VFVF…ATSP and MLLV…ILYL. The Cytoplasmic segment spans residues 113 to 131; that stretch reads RTLQSKFVLFGREVSPAHQ. Helical transmembrane passes span 132–148 and 149–165; these read YALA…LAGA and GSAV…VIGS. A required for interaction with GDI1 region spans residues 165 to 185; sequence SHAAFHQIEAVDGEELQMEPV. The Cytoplasmic portion of the chain corresponds to 166–185; the sequence is HAAFHQIEAVDGEELQMEPV. The segment at 175-185 is required for interaction with prenylated RAB3A and VAMP2; that stretch reads VDGEELQMEPV. The homodimerization stretch occupies residues 175-185; the sequence is VDGEELQMEPV.

This sequence belongs to the PRA1 family. Homodimer. Interacts with VAMP2 (synaptobrevin-2), prenylated Rab proteins, GDI1, NDRG1 and PCLO.

The protein localises to the cell membrane. It localises to the cytoplasm. The protein resides in the golgi apparatus. Its subcellular location is the cytoplasmic vesicle. It is found in the secretory vesicle. The protein localises to the synaptic vesicle. General Rab protein regulator required for vesicle formation from the Golgi complex. May control vesicle docking and fusion by mediating the action of Rab GTPases to the SNARE complexes. In addition it inhibits the removal of Rab GTPases from the membrane by GDI1. In Bos taurus (Bovine), this protein is Prenylated Rab acceptor protein 1 (RABAC1).